A 313-amino-acid polypeptide reads, in one-letter code: Competence protein ComGA (313 aa).

Position 138 to 145 (138 to 145 (GPVGSGKT)) interacts with ATP.

The protein belongs to the GSP E family.

It is found in the cell membrane. Its function is as follows. Required for uptake of DNA by competent cells. May be involved in assembly of a complex forming a transformation pilus at the surface of competent cells. In Streptococcus pneumoniae (strain ATCC BAA-255 / R6), this protein is Competence protein ComGA.